The sequence spans 421 residues: CinA-like protein (421 aa).

The protein belongs to the CinA family.

This is CinA-like protein from Myxococcus xanthus (strain DK1622).